Here is a 330-residue protein sequence, read N- to C-terminus: Aspartate--ammonia ligase (330 aa).

It belongs to the class-II aminoacyl-tRNA synthetase family. AsnA subfamily.

It is found in the cytoplasm. The enzyme catalyses L-aspartate + NH4(+) + ATP = L-asparagine + AMP + diphosphate + H(+). It functions in the pathway amino-acid biosynthesis; L-asparagine biosynthesis; L-asparagine from L-aspartate (ammonia route): step 1/1. In Escherichia coli O139:H28 (strain E24377A / ETEC), this protein is Aspartate--ammonia ligase.